A 512-amino-acid chain; its full sequence is Bestrophin-2 (512 aa).

Residues 1 to 31 (MTVTYTARVAKARFGGFSKLLLLWRGSIYKL) lie on the Cytoplasmic side of the membrane. Ala-10 is a binding site for Ca(2+). The chain crosses the membrane as a helical span at residues 32 to 51 (LWRELLCFLGLFMALSAAYR). The Extracellular portion of the chain corresponds to 52–60 (FVLTEEQKR). Residues 61 to 82 (YFEKLVLYCDRYASLIPVSFVL) form a helical membrane-spanning segment. Topologically, residues 83–238 (GFYVTLVVHR…WISVPLVYTQ (156 aa)) are cytoplasmic. Residues 239–255 (VVTIAVYSYFLACLIGR) traverse the membrane as a helical segment. The Extracellular segment spans residues 256 to 274 (QFLDPAQGYKDHDLDLCVP). Residues 275-288 (IFTLLQFFFYAGWL) form a helical membrane-spanning segment. The Cytoplasmic portion of the chain corresponds to 289–512 (KVAEQLINPF…PIGEEEESLA (224 aa)). Residues Gln-293, Asn-296, Asp-301, and Asp-304 each coordinate Ca(2+). Residues 453–512 (VDLGQPEPESEPITGPESPALVPAPRAPSEPLTVVPLSGTRGPAPPWLPSPIGEEEESLA) are disordered.

Belongs to the anion channel-forming bestrophin (TC 1.A.46) family. Calcium-sensitive chloride channel subfamily. Pentamer. Interacts with GLUL; this interaction tethers a fraction of GLUL to the membrane, causing a decrease of cytosolic glutamine synthase (GS) activity and inhibits the chloride channel activity of BEST2 by affecting the gating at the aperture in the absence of intracellular glutamate.

The protein resides in the cell membrane. It is found in the basolateral cell membrane. The enzyme catalyses chloride(in) = chloride(out). It carries out the reaction iodide(out) = iodide(in). The catalysed reaction is hydrogencarbonate(in) = hydrogencarbonate(out). It catalyses the reaction L-glutamate(out) = L-glutamate(in). The enzyme catalyses L-glutamine(out) = L-glutamine(in). With respect to regulation, chloride channel activity is allosterically inhibited by GLUL/glutamine synthase (GS) which affects the gating at the aperture in the absence of intracellular glutamate. Inhibitory effect of GLUL is relieved upon increasing of intracellular level of L-glutamate. In terms of biological role, ligand-gated anion channel that allows the movement of anions across cell membranes when activated by calcium (Ca2+). Transports a large specter of anions, namely mediates the movement of chloride, L-glutamate and iodide. Calcium-binding triggers the dilation of the aperture, but calcium-dependent gating is only effective when the size of the passing anion is bigger than the closed aperture. Mediates the calcium-activated hydrogencarbonate movement and participates in colonic hydrogencarbonate secretion concomitant with mucin secretion. In non-pigmented epithelium (NPE), mediates the efflux of intracellular L-glutamate; binding of intracellular L-glutamate activates and open both the neck and the aperture of the channel, leading to L-glutamate exit promoting chloride influx movement from the extracellular side in trans. Also exhibits a directional permeability for intracellular glutamine, in a similar manner as for L-glutamate. This chain is Bestrophin-2, found in Bos taurus (Bovine).